Here is a 352-residue protein sequence, read N- to C-terminus: Ion-translocating oxidoreductase complex subunit D (352 aa).

Transmembrane regions (helical) follow at residues 20–40 (IMLL…WFFG), 42–62 (GTLF…AIVL), 69–91 (VASH…SIPP), and 123–143 (PAMI…TSWL). The residue at position 187 (T187) is an FMN phosphoryl threonine. The next 5 membrane-spanning stretches (helical) occupy residues 215–235 (LAGV…VFLL), 242–262 (WHIP…GWLF), 267–287 (LASP…FFIL), 301–321 (LIFG…GGYP), and 322–342 (DGVA…DYYT).

The protein belongs to the NqrB/RnfD family. The complex is composed of six subunits: RsxA, RsxB, RsxC, RsxD, RsxE and RsxG. FMN is required as a cofactor.

It is found in the cell inner membrane. In terms of biological role, part of a membrane-bound complex that couples electron transfer with translocation of ions across the membrane. Required to maintain the reduced state of SoxR. The sequence is that of Ion-translocating oxidoreductase complex subunit D from Salmonella typhi.